A 635-amino-acid chain; its full sequence is Multiple inositol polyphosphate phosphatase 1 (635 aa).

The N-terminal stretch at 1–23 (MMVKIKNIIILFCIFGLLSNVSS) is a signal peptide. Topologically, residues 24 to 565 (LSSSSSSSQS…GNDSHSKKSS (542 aa)) are extracellular. Residues 66-102 (KNGDSNSQGDGSSGNSNSNSNSNSNSNSNSDSSNEPP) are disordered. The span at 67–99 (NGDSNSQGDGSSGNSNSNSNSNSNSNSNSDSSN) shows a compositional bias: low complexity. Residue His-116 is part of the active site. Positions 380-421 (SSSSSSSSSSNNGDNSGSNGSSGSGSSTSTSSNDNGSTNNND) are enriched in low complexity. A disordered region spans residues 380–425 (SSSSSSSSSSNNGDNSGSNGSSGSGSSTSTSSNDNGSTNNNDNKVE). A helical transmembrane segment spans residues 566 to 586 (YFLAIFIPITFLVGGTIGGIF). Topologically, residues 587-635 (TYFSYEKIMQVKNRKKLTQYGNDEFISSPKSKSFSFKPTKFDSRSPLIQ) are cytoplasmic. Residues 614 to 624 (SPKSKSFSFKP) show a composition bias toward low complexity. Positions 614-635 (SPKSKSFSFKPTKFDSRSPLIQ) are disordered.

Belongs to the histidine acid phosphatase family. MINPP1 subfamily.

The protein resides in the membrane. The catalysed reaction is 1D-myo-inositol hexakisphosphate + H2O = 1D-myo-inositol 1,2,4,5,6-pentakisphosphate + phosphate. It carries out the reaction 1D-myo-inositol 1,2,4,5,6-pentakisphosphate + H2O = 1D-myo-inositol 1,2,5,6-tetrakisphosphate + phosphate. The enzyme catalyses 1D-myo-inositol 1,2,5,6-tetrakisphosphate + H2O = 1D-myo-inositol 1,2,6-trisphosphate + phosphate. It catalyses the reaction 1D-myo-inositol 1,2,6-trisphosphate + H2O = 1D-myo-inositol 1,2-bisphosphate + phosphate. The catalysed reaction is 1D-myo-inositol 1,2-bisphosphate + H2O = 1D-myo-inositol 2-phosphate + phosphate. It carries out the reaction (2R)-2,3-bisphosphoglycerate + H2O = (2R)-2-phosphoglycerate + phosphate. Its function is as follows. Probable multiple inositol polyphosphate phosphatase that hydrolyzes 1D-myo-inositol 1,3,4,5,6-pentakisphosphate (InsP5[2OH]) and 1D-myo-inositol hexakisphosphate (InsP6) to a range of less phosphorylated inositol phosphates. This regulates the availability of these various small molecule second messengers and metal chelators which control many aspects of cell physiology. May have a dual substrate specificity, and function as a 2,3-bisphosphoglycerate 3-phosphatase hydrolyzing 2,3-bisphosphoglycerate to 2-phosphoglycerate. 2,3-bisphosphoglycerate (BPG) is formed as part of the Rapoport-Luebering glycolytic bypass. In Dictyostelium discoideum (Social amoeba), this protein is Multiple inositol polyphosphate phosphatase 1 (mipp1).